A 203-amino-acid polypeptide reads, in one-letter code: Mediator of RNA polymerase II transcription subunit 22 (203 aa).

Positions 93 to 123 form a coiled coil; sequence SVNEAINQRNQQLRSLQEECDKKLIALRDEI. Residues 164–188 show a composition bias toward polar residues; sequence ESLSMPLTTATAEQSIATSQSSTPS. The tract at residues 164–203 is disordered; the sequence is ESLSMPLTTATAEQSIATSQSSTPSHPHVNGHGAGPTDHS.

The protein belongs to the Mediator complex subunit 22 family. Component of the Mediator complex.

Its subcellular location is the nucleus. Its function is as follows. Component of the Mediator complex, a coactivator involved in the regulated transcription of nearly all RNA polymerase II-dependent genes. Mediator functions as a bridge to convey information from gene-specific regulatory proteins to the basal RNA polymerase II transcription machinery. Mediator is recruited to promoters by direct interactions with regulatory proteins and serves as a scaffold for the assembly of a functional preinitiation complex with RNA polymerase II and the general transcription factors. The protein is Mediator of RNA polymerase II transcription subunit 22 (MED22) of Gallus gallus (Chicken).